The following is a 142-amino-acid chain: Small ribosomal subunit protein uS11 (142 aa).

Residues 1-21 (MPPKTRGAVRKPRRKDKKNIA) form a disordered region. Basic residues predominate over residues 7–17 (GAVRKPRRKDK).

This sequence belongs to the universal ribosomal protein uS11 family. As to quaternary structure, part of the 30S ribosomal subunit. Interacts with proteins S7 and S18. Binds to IF-3.

Functionally, located on the platform of the 30S subunit, it bridges several disparate RNA helices of the 16S rRNA. Forms part of the Shine-Dalgarno cleft in the 70S ribosome. This is Small ribosomal subunit protein uS11 from Paenarthrobacter aurescens (strain TC1).